We begin with the raw amino-acid sequence, 484 residues long: Chromosomal replication initiator protein DnaA (484 aa).

The domain I, interacts with DnaA modulators stretch occupies residues methionine 1 to valine 74. Positions valine 74–proline 139 are domain II. The segment at phenylalanine 140–isoleucine 356 is domain III, AAA+ region. Positions 184, 186, 187, and 188 each coordinate ATP. Positions aspartate 357 to asparagine 484 are domain IV, binds dsDNA.

This sequence belongs to the DnaA family. Oligomerizes as a right-handed, spiral filament on DNA at oriC.

The protein resides in the cytoplasm. Plays an essential role in the initiation and regulation of chromosomal replication. ATP-DnaA binds to the origin of replication (oriC) to initiate formation of the DNA replication initiation complex once per cell cycle. Binds the DnaA box (a 9 base pair repeat at the origin) and separates the double-stranded (ds)DNA. Forms a right-handed helical filament on oriC DNA; dsDNA binds to the exterior of the filament while single-stranded (ss)DNA is stabiized in the filament's interior. The ATP-DnaA-oriC complex binds and stabilizes one strand of the AT-rich DNA unwinding element (DUE), permitting loading of DNA polymerase. After initiation quickly degrades to an ADP-DnaA complex that is not apt for DNA replication. Binds acidic phospholipids. The sequence is that of Chromosomal replication initiator protein DnaA from Borrelia garinii subsp. bavariensis (strain ATCC BAA-2496 / DSM 23469 / PBi) (Borreliella bavariensis).